A 500-amino-acid polypeptide reads, in one-letter code: L-arabinose isomerase (500 aa).

Mn(2+) contacts are provided by Glu-306, Glu-333, His-350, and His-450.

It belongs to the arabinose isomerase family. As to quaternary structure, homohexamer. The cofactor is Mn(2+).

The catalysed reaction is beta-L-arabinopyranose = L-ribulose. The protein operates within carbohydrate degradation; L-arabinose degradation via L-ribulose; D-xylulose 5-phosphate from L-arabinose (bacterial route): step 1/3. Functionally, catalyzes the conversion of L-arabinose to L-ribulose. This is L-arabinose isomerase from Shigella flexneri serotype 5b (strain 8401).